A 982-amino-acid polypeptide reads, in one-letter code: Hunchback-like protein (982 aa).

The tract at residues 87–194 is disordered; sequence QPGEKIHPDG…SNYQVTSEPV (108 aa). A compositionally biased stretch (basic and acidic residues) spans 101–110; sequence PKEDGRKSSE. A compositionally biased stretch (polar residues) spans 111–132; sequence HTNSYDVSASQSPSNDGAQSDS. A compositionally biased stretch (acidic residues) spans 142–152; that stretch reads CMTETEMDTDE. Positions 153–175 are enriched in basic and acidic residues; that stretch reads KDSTIKPEDQATPKLEEGSDSKP. Residues 176 to 193 show a composition bias toward polar residues; it reads ESTSVEGTSSNYQVTSEP. C2H2-type zinc fingers lie at residues 336 to 358, 361 to 384, 538 to 560, 567 to 589, 595 to 617, 623 to 647, and 734 to 756; these read LVCP…MNTH, HQCS…RESH, FKCK…ARTH, LNCQ…YRNH, FQCK…MKSH, FRCM…KYNH, and LKCS…SMSH. Residues 377–415 are disordered; it reads KKHMRESHTVEEQLRAGFESEPAKESASSPKNLSLSKDG. Positions 811 to 896 are disordered; that stretch reads EEMDQGSDSA…PPLHSSSIVA (86 aa). Composition is skewed to polar residues over residues 816 to 831 and 843 to 862; these read GSDS…QISS and SLEQ…SNDS. Over residues 863–875 the composition is skewed to basic and acidic residues; it reads AMEKDGESADDAP. C2H2-type zinc fingers lie at residues 929–951 and 957–981; these read FYCD…MRFH and FMCS…QARH.

The protein belongs to the hunchback C2H2-type zinc-finger protein family. As to expression, expressed primarily in ectodermal cells during embryonic and larval development.

The protein localises to the nucleus. In terms of biological role, required for the late stages of development. Plays a role in the developmental timing of postembryonic hypodermal seam cell fusion events and adult alae production. This chain is Hunchback-like protein, found in Caenorhabditis elegans.